Consider the following 1969-residue polypeptide: Protein mono-ADP-ribosyltransferase PARP4 (1969 aa).

The BRCT domain maps to 1-94; that stretch reads MTLGIFANCI…RLLDVRNYDP (94 aa). The Nuclear localization signal motif lies at 19 to 25; it reads PRQQKKK. The interval 92-132 is disordered; the sequence is YDPLSPAPAAPPAERSRSEVQSEYLPSDNTPEKENTEVTEV. Positions 235–363 constitute a PARP alpha-helical domain; it reads SEKLQALLLE…ETNLSKPNPP (129 aa). The 205-residue stretch at 362–566 folds into the PARP catalytic domain; the sequence is PPSLAKYRAL…FCTPGDQIKE (205 aa). In terms of domain architecture, VIT spans 600-728; that stretch reads TNIKAGLQDA…KVLIKITYIT (129 aa). Residues 869-1039 enclose the VWFA domain; it reads EVIICLDCSS…KQIEAQMTRI (171 aa). S1229 is subject to Phosphoserine. Residues 1230–1242 carry the Nuclear localization signal motif; the sequence is DGHGVLQPVSVSS. Pro residues-rich tracts occupy residues 1372–1387, 1402–1417, 1425–1444, 1485–1513, and 1521–1540; these read PPHP…PLPL, HPPP…PPPS, LPPP…PPIP, and LPPP…PPPS. The interval 1372–1608 is disordered; that stretch reads PPHPLGGTHP…AGTQFSLSPI (237 aa). The 99-residue stretch at 1443 to 1541 folds into the FH1 domain; that stretch reads IPGGTLIPPS…HIPPPPPIPG (99 aa). Low complexity predominate over residues 1541-1556; it reads GGTLIPSPSSLFGGTH. Residues 1557–1585 are compositionally biased toward pro residues; it reads LPPPPLLPAGTHIPPPPPITGSTHPPPPS. The segment at 1808–1969 is interaction with the major vault protein; that stretch reads FCDEDQESPV…LHRILYYSQG (162 aa).

This sequence belongs to the ARTD/PARP family. As to quaternary structure, component of the vault ribonucleoprotein particle, at least composed of MVP, PARP4 and one or more vault RNAs (vRNAs). Interacts with TEP1.

Its subcellular location is the cytoplasm. It localises to the nucleus. It carries out the reaction L-aspartyl-[protein] + NAD(+) = 4-O-(ADP-D-ribosyl)-L-aspartyl-[protein] + nicotinamide. The catalysed reaction is L-glutamyl-[protein] + NAD(+) = 5-O-(ADP-D-ribosyl)-L-glutamyl-[protein] + nicotinamide. Its function is as follows. Mono-ADP-ribosyltransferase that mediates mono-ADP-ribosylation of target proteins. This is Protein mono-ADP-ribosyltransferase PARP4 from Mus musculus (Mouse).